The chain runs to 368 residues: Transaldolase (368 aa).

The Schiff-base intermediate with substrate role is filled by lysine 140.

This sequence belongs to the transaldolase family. Type 2 subfamily.

Its subcellular location is the cytoplasm. It carries out the reaction D-sedoheptulose 7-phosphate + D-glyceraldehyde 3-phosphate = D-erythrose 4-phosphate + beta-D-fructose 6-phosphate. The protein operates within carbohydrate degradation; pentose phosphate pathway; D-glyceraldehyde 3-phosphate and beta-D-fructose 6-phosphate from D-ribose 5-phosphate and D-xylulose 5-phosphate (non-oxidative stage): step 2/3. Functionally, transaldolase is important for the balance of metabolites in the pentose-phosphate pathway. The chain is Transaldolase from Kocuria rhizophila (strain ATCC 9341 / DSM 348 / NBRC 103217 / DC2201).